The chain runs to 372 residues: Lipoyl synthase, mitochondrial (372 aa).

The [4Fe-4S] cluster site is built by Cys-103, Cys-108, Cys-114, Cys-134, Cys-138, Cys-141, and Ser-349. Residues 119 to 338 (EHGTQTATIM…EERGNQLGFL (220 aa)) enclose the Radical SAM core domain.

The protein belongs to the radical SAM superfamily. Lipoyl synthase family. It depends on [4Fe-4S] cluster as a cofactor.

It is found in the mitochondrion. It catalyses the reaction [[Fe-S] cluster scaffold protein carrying a second [4Fe-4S](2+) cluster] + N(6)-octanoyl-L-lysyl-[protein] + 2 oxidized [2Fe-2S]-[ferredoxin] + 2 S-adenosyl-L-methionine + 4 H(+) = [[Fe-S] cluster scaffold protein] + N(6)-[(R)-dihydrolipoyl]-L-lysyl-[protein] + 4 Fe(3+) + 2 hydrogen sulfide + 2 5'-deoxyadenosine + 2 L-methionine + 2 reduced [2Fe-2S]-[ferredoxin]. Its pathway is protein modification; protein lipoylation via endogenous pathway; protein N(6)-(lipoyl)lysine from octanoyl-[acyl-carrier-protein]: step 2/2. In terms of biological role, catalyzes the radical-mediated insertion of two sulfur atoms into the C-6 and C-8 positions of the octanoyl moiety bound to the lipoyl domains of lipoate-dependent enzymes, thereby converting the octanoylated domains into lipoylated derivatives. The sequence is that of Lipoyl synthase, mitochondrial from Drosophila willistoni (Fruit fly).